We begin with the raw amino-acid sequence, 398 residues long: Probable beta-1,3-galactosyltransferase 5 (398 aa).

A helical; Signal-anchor for type II membrane protein transmembrane segment spans residues 11-31 (LTMTWVPLLCISCFFLGAIFT). Asn110, Asn115, and Asn206 each carry an N-linked (GlcNAc...) asparagine glycan.

The protein belongs to the glycosyltransferase 31 family. Mn(2+) serves as cofactor.

It localises to the golgi apparatus membrane. It functions in the pathway protein modification; protein glycosylation. Its function is as follows. Beta-1,3-galactosyltransferase that transfers galactose from UDP-galactose to substrates with a terminal glycosyl residue. In Arabidopsis thaliana (Mouse-ear cress), this protein is Probable beta-1,3-galactosyltransferase 5 (B3GALT5).